The following is an 88-amino-acid chain: Small ribosomal subunit protein uS15c (88 aa).

The protein belongs to the universal ribosomal protein uS15 family. In terms of assembly, part of the 30S ribosomal subunit.

The protein localises to the plastid. It is found in the chloroplast. The sequence is that of Small ribosomal subunit protein uS15c (rps15) from Capsella bursa-pastoris (Shepherd's purse).